The following is a 181-amino-acid chain: Large ribosomal subunit protein uL5 (181 aa).

The protein belongs to the universal ribosomal protein uL5 family. As to quaternary structure, part of the 50S ribosomal subunit; part of the 5S rRNA/L5/L18/L25 subcomplex. Contacts the 5S rRNA and the P site tRNA. Forms a bridge to the 30S subunit in the 70S ribosome.

Its function is as follows. This is one of the proteins that bind and probably mediate the attachment of the 5S RNA into the large ribosomal subunit, where it forms part of the central protuberance. In the 70S ribosome it contacts protein S13 of the 30S subunit (bridge B1b), connecting the 2 subunits; this bridge is implicated in subunit movement. Contacts the P site tRNA; the 5S rRNA and some of its associated proteins might help stabilize positioning of ribosome-bound tRNAs. The chain is Large ribosomal subunit protein uL5 from Campylobacter lari (strain RM2100 / D67 / ATCC BAA-1060).